The sequence spans 276 residues: NADH-cytochrome b5 reductase 2 (276 aa).

Positions 15–127 (EAKYPLPLIE…RGPTGRLFYN (113 aa)) constitute an FAD-binding FR-type domain. An N6-acetyllysine modification is found at K17. Residue Y18 is modified to Phosphotyrosine. FAD contacts are provided by residues 107 to 137 (ENMK…IKAN) and 146 to 181 (LVHH…RMSL).

This sequence belongs to the flavoprotein pyridine nucleotide cytochrome reductase family. FAD serves as cofactor.

The catalysed reaction is 2 Fe(III)-[cytochrome b5] + NADH = 2 Fe(II)-[cytochrome b5] + NAD(+) + H(+). NADH-cytochrome b5 reductases are involved in desaturation and elongation of fatty acids, cholesterol biosynthesis, drug metabolism, and, in erythrocyte, methemoglobin reduction. Responsible for NADH-dependent lucigenin chemiluminescence in spermatozoa by reducing both lucigenin and 2-[4-iodophenyl]-3-[4-nitrophenyl]-5-[2,4-disulfophenyl]-2H tetrazolium monosodium salt (WST-1). The polypeptide is NADH-cytochrome b5 reductase 2 (Cyb5r2) (Mus musculus (Mouse)).